The chain runs to 299 residues: Taste receptor type 2 member 4 (299 aa).

Topologically, residues 1-9 (MLWLFYSSA) are extracellular. A helical membrane pass occupies residues 10 to 30 (IIASVILDFVGIIMSLFITVV). Residues 31-46 (NYKTWVKSHRISSSER) are Cytoplasmic-facing. Residues 47-67 (ILFSLGITRFFMLALFLVNTI) traverse the membrane as a helical segment. Over 68 to 81 (YFVSSNKERSVYLS) the chain is Extracellular. A helical membrane pass occupies residues 82-102 (AFFVLCFMFLDSSSLWFVTLL). The Cytoplasmic segment spans residues 103-131 (NSLYCVKITNFQHSVFLLLKRNISPKIPR). A helical membrane pass occupies residues 132–152 (LLPACVLISAFTTCLYITLSQ). The Extracellular segment spans residues 153-172 (ASPFPELVTKRNNTSFNISE). 3 N-linked (GlcNAc...) asparagine glycosylation sites follow: Asn164, Asn165, and Asn169. Residues 173–193 (GILSLVVSFVLSSSLQFIINV) traverse the membrane as a helical segment. At 194–230 (TSASLLIYSLRRHIRKMQKNATGFWNPQTEAHVGAMK) the chain is on the cytoplasmic side. The chain crosses the membrane as a helical span at residues 231-251 (LMIYFLILYIPYSVATLVQYL). Over 252 to 262 (PFYAGMDMGTK) the chain is Extracellular. The helical transmembrane segment at 263 to 283 (SICLIFATLYSPGHSVLIIIT) threads the bilayer. Topologically, residues 284–299 (HPKLKTTAKKILCFKK) are cytoplasmic.

Belongs to the G-protein coupled receptor T2R family.

The protein localises to the membrane. The protein resides in the cell projection. It is found in the cilium membrane. Functionally, gustducin-coupled receptor implicated in the perception of bitter compounds in the oral cavity and the gastrointestinal tract. Signals through PLCB2 and the calcium-regulated cation channel TRPM5. In airway epithelial cells, binding of denatonium increases the intracellular calcium ion concentration and stimulates ciliary beat frequency. This chain is Taste receptor type 2 member 4 (TAS2R4), found in Papio hamadryas (Hamadryas baboon).